We begin with the raw amino-acid sequence, 52 residues long: Alpha-crystallin B chain (52 aa).

It belongs to the small heat shock protein (HSP20) family. In terms of assembly, homodimer. Aggregates with homologous proteins, including alpha-A-crystallin and the small heat shock protein HSPB1, to form large heteromeric complexes.

Functionally, may contribute to the transparency and refractive index of the lens. This chain is Alpha-crystallin B chain (CRYAB), found in Eudromia elegans (Elegant crested-tinamou).